A 394-amino-acid polypeptide reads, in one-letter code: Keratin, type I cuticular Ha4 (394 aa).

Positions 1–56 (MSYSCCLPSLGCRTSCSSRPCVPPSCHGYTLPGACNIPANVSNCNWFCEGSFNGSE) are head. Positions 56–367 (EKETMQFLND…SLLESEDCKL (312 aa)) constitute an IF rod domain. A coil 1A region spans residues 57-91 (KETMQFLNDRLASYLEKVRQLERDNAELEKLIQER). Residues 92–102 (SQQQEPLLCPS) form a linker 1 region. The coil 1B stretch occupies residues 103–203 (YQSYFKTIEE…HEEEVNTLRS (101 aa)). Residues 204–219 (QLGDRLNVEVDTAPTV) form a linker 12 region. The interval 220-363 (DLNQVLNETR…NTYRSLLESE (144 aa)) is coil 2. A tail region spans residues 364 to 394 (DCKLPCNPCATTNASGNSCGPCGTSQKGCCN).

It belongs to the intermediate filament family. As to expression, expressed in the hair follicles.

The protein is Keratin, type I cuticular Ha4 (KRT34) of Homo sapiens (Human).